The chain runs to 721 residues: Photosystem I P700 chlorophyll a apoprotein A1 (721 aa).

The next 8 helical transmembrane spans lie at 61 to 84 (VFSAHFGQLAIILIWLSGMYFHGA), 147 to 170 (LYCTAIGALIFAALMLFAGWFHYH), 186 to 210 (LNHHLAGLLGLGSLSWAGHQVHVSL), 282 to 300 (TAHHHLAIAILFLIAGHMY), 337 to 360 (WHAQLALNLAMLGSLTIVVAHHMY), 376 to 402 (LSLFTHHMWIRGFLIVGAAAHAAIFMV), 424 to 446 (AIVSHLNWACIFLGFHSFGLYIH), and 522 to 540 (FLVHHIHAFTIHVTVLILL). Cys-564 and Cys-573 together coordinate [4Fe-4S] cluster. 2 helical membrane-spanning segments follow: residues 580–601 (HVFLGLFWMYNAISVVIFHFSW) and 655–677 (LSAYGLFFLGAHFVWAFSLMFLF). His-666 is a chlorophyll a' binding site. Met-674 and Tyr-682 together coordinate chlorophyll a. Residue Trp-683 coordinates phylloquinone. The chain crosses the membrane as a helical span at residues 715 to 721 (AVGVAHY).

It belongs to the PsaA/PsaB family. The PsaA/B heterodimer binds the P700 chlorophyll special pair and subsequent electron acceptors. PSI consists of a core antenna complex that captures photons, and an electron transfer chain that converts photonic excitation into a charge separation. The eukaryotic PSI reaction center is composed of at least 11 subunits. P700 is a chlorophyll a/chlorophyll a' dimer, A0 is one or more chlorophyll a, A1 is one or both phylloquinones and FX is a shared 4Fe-4S iron-sulfur center. is required as a cofactor.

The protein localises to the plastid. Its subcellular location is the chloroplast thylakoid membrane. It catalyses the reaction reduced [plastocyanin] + hnu + oxidized [2Fe-2S]-[ferredoxin] = oxidized [plastocyanin] + reduced [2Fe-2S]-[ferredoxin]. Its function is as follows. PsaA and PsaB bind P700, the primary electron donor of photosystem I (PSI), as well as the electron acceptors A0, A1 and FX. PSI is a plastocyanin-ferredoxin oxidoreductase, converting photonic excitation into a charge separation, which transfers an electron from the donor P700 chlorophyll pair to the spectroscopically characterized acceptors A0, A1, FX, FA and FB in turn. Oxidized P700 is reduced on the lumenal side of the thylakoid membrane by plastocyanin. The polypeptide is Photosystem I P700 chlorophyll a apoprotein A1 (Ginkgo biloba (Ginkgo)).